Reading from the N-terminus, the 1160-residue chain is Nonribosomal peptide synthetase fmqC (1160 aa).

Positions 132–520 are adenylation; it reads TYRELNDRSS…LGEVEHALQQ (389 aa). Residues 642–719 form the Carrier domain; sequence QPVTQLEESL…EMAGMLDGVT (78 aa). Ser679 is subject to O-(pantetheine 4'-phosphoryl)serine. The interval 749 to 1025 is condensation; sequence CTLEDLQEGF…CAAAETPMRI (277 aa).

This sequence belongs to the NRP synthetase family. Interacts with the mitogen-activated protein kinase mpkA. In terms of processing, phosphorylated by mpkA during conidiogenesis.

The protein resides in the cytoplasm. Its pathway is alkaloid biosynthesis. Its function is as follows. Nonribosomal peptide synthetase; part of the gene cluster that mediates the biosynthesis of the antitumor fumiquinazolines that confer a dual-usage capability to defend against phagocytes in the environment and animal hosts. The simplest member is fumiquinazoline F (FQF) with a 6-6-6 tricyclic core derived from anthranilic acid (Ant), tryptophan (Trp), and alanine (Ala). The trimodular NRPS fmqA is responsible for FQF formation. Modules 1, 2 and 3 of fmqA are predicted to activate and load Ant, Trp and Ala, respectively, providing for the assembly of an Ant-Trp-Ala-S-enzyme intermediate that would undergo double cyclization for chain release and generation of the tricyclic 6-6-6 product fumiquinazoline F. The presence of an E domain predicted for module 2 of fmqA is consistent with epimerization of L-Trp to D-Trp during assembly to generate the R-stereocenter at C14 of FQF. The FAD-dependent monooxygenase fmqB and the monomodular NRPS fmqC then maturate FQF to FQA. FmqB oxidizes the 2',3'-double bond of the indole side chain of FQF, and fmqC activates L-Ala as the adenylate, installs it as the pantetheinyl thioester on its carrier protein domain, and acylates the oxidized indole for subsequent intramolecular cyclization to create the 6-5-5-imidazolindolone of FQA. The FAD-linked oxidoreductase fmqD introduces a third layer of scaffold complexity by converting FQA to the spirohemiaminal FQC, presumably by catalyzing the formation of a transient imine within the pyrazinone ring. FQC subsequently converts nonenzymatically to the known cyclic aminal FQD. In Aspergillus fumigatus (strain ATCC MYA-4609 / CBS 101355 / FGSC A1100 / Af293) (Neosartorya fumigata), this protein is Nonribosomal peptide synthetase fmqC.